A 20-amino-acid chain; its full sequence is Isocitrate dehydrogenase [NADP] (20 aa).

This sequence belongs to the isocitrate and isopropylmalate dehydrogenases family. It depends on Mn(2+) as a cofactor. Mg(2+) is required as a cofactor.

The protein localises to the cytoplasm. The catalysed reaction is D-threo-isocitrate + NADP(+) = 2-oxoglutarate + CO2 + NADPH. The sequence is that of Isocitrate dehydrogenase [NADP] from Naegleria fowleri (Brain eating amoeba).